The primary structure comprises 92 residues: UPF0298 protein ABC2380 (92 aa).

The protein belongs to the UPF0298 family.

The protein resides in the cytoplasm. In Shouchella clausii (strain KSM-K16) (Alkalihalobacillus clausii), this protein is UPF0298 protein ABC2380.